We begin with the raw amino-acid sequence, 158 residues long: Transcription elongation factor GreA (158 aa).

It belongs to the GreA/GreB family.

Necessary for efficient RNA polymerase transcription elongation past template-encoded arresting sites. The arresting sites in DNA have the property of trapping a certain fraction of elongating RNA polymerases that pass through, resulting in locked ternary complexes. Cleavage of the nascent transcript by cleavage factors such as GreA or GreB allows the resumption of elongation from the new 3'terminus. GreA releases sequences of 2 to 3 nucleotides. This chain is Transcription elongation factor GreA, found in Acinetobacter baumannii (strain SDF).